A 420-amino-acid polypeptide reads, in one-letter code: Protein translocase subunit SecY (420 aa).

The next 10 membrane-spanning stretches (helical) occupy residues 9 to 29, 61 to 81, 104 to 124, 141 to 161, 173 to 193, 203 to 223, 257 to 277, 300 to 320, 355 to 375, and 377 to 397; these read ILITLGFLFLYRVLAYIPIPG, LSIISLGIMPYITSSIIMELL, IVRYLTILITLIQAVSVSVGL, VFMIVSAFSMLTGTMLLMWIG, ISLIIFAGIVSGIPSAISGTF, ILMLIGIVLIVLATIFAIIYV, LSGVIPPIFASALLVFPSTIL, YNILMFLLIIFFAYFYSSIVF, KLTLWGSLYLALISTVPWILV, and AMGVPFYFGGTAVLIVVQVAI.

The protein belongs to the SecY/SEC61-alpha family. As to quaternary structure, component of the Sec protein translocase complex. Heterotrimer consisting of SecY, SecE and SecG subunits. The heterotrimers can form oligomers, although 1 heterotrimer is thought to be able to translocate proteins. Interacts with the ribosome. Interacts with SecDF, and other proteins may be involved. Interacts with SecA.

The protein localises to the cell inner membrane. The central subunit of the protein translocation channel SecYEG. Consists of two halves formed by TMs 1-5 and 6-10. These two domains form a lateral gate at the front which open onto the bilayer between TMs 2 and 7, and are clamped together by SecE at the back. The channel is closed by both a pore ring composed of hydrophobic SecY resides and a short helix (helix 2A) on the extracellular side of the membrane which forms a plug. The plug probably moves laterally to allow the channel to open. The ring and the pore may move independently. This chain is Protein translocase subunit SecY, found in Helicobacter pylori (strain J99 / ATCC 700824) (Campylobacter pylori J99).